Consider the following 520-residue polypeptide: 2-isopropylmalate synthase (520 aa).

The 263-residue stretch at 12 to 274 (IRIFDTTLRD…DSAINTPRIV (263 aa)) folds into the Pyruvate carboxyltransferase domain. Mn(2+)-binding residues include Asp21, His209, His211, and Asn245. A regulatory domain region spans residues 396–520 (RLASMTISDV…VIAGKTAAVA (125 aa)).

It belongs to the alpha-IPM synthase/homocitrate synthase family. LeuA type 1 subfamily. Homodimer. Mn(2+) is required as a cofactor.

The protein localises to the cytoplasm. It carries out the reaction 3-methyl-2-oxobutanoate + acetyl-CoA + H2O = (2S)-2-isopropylmalate + CoA + H(+). The protein operates within amino-acid biosynthesis; L-leucine biosynthesis; L-leucine from 3-methyl-2-oxobutanoate: step 1/4. Functionally, catalyzes the condensation of the acetyl group of acetyl-CoA with 3-methyl-2-oxobutanoate (2-ketoisovalerate) to form 3-carboxy-3-hydroxy-4-methylpentanoate (2-isopropylmalate). The protein is 2-isopropylmalate synthase of Xanthomonas oryzae pv. oryzae (strain KACC10331 / KXO85).